A 729-amino-acid polypeptide reads, in one-letter code: Isocitrate dehydrogenase [NADP] (729 aa).

The NADP(+) site is built by N83 and S85. Residues S121, N124, R128, R134, and K244 each coordinate D-threo-isocitrate. Position 124 (N124) interacts with NADP(+). Residue D337 participates in Mg(2+) binding. Residues Y407 and R534 each coordinate D-threo-isocitrate. Residues D535 and D539 each coordinate Mg(2+). S572, H576, R587, D589, and R636 together coordinate NADP(+).

It belongs to the monomeric-type IDH family. Monomer. Mg(2+) serves as cofactor. Requires Mn(2+) as cofactor.

The enzyme catalyses D-threo-isocitrate + NADP(+) = 2-oxoglutarate + CO2 + NADPH. Its function is as follows. Catalyzes the oxidative decarboxylation of isocitrate to 2-oxoglutarate and carbon dioxide with the concomitant reduction of NADP(+). This Corynebacterium efficiens (strain DSM 44549 / YS-314 / AJ 12310 / JCM 11189 / NBRC 100395) protein is Isocitrate dehydrogenase [NADP].